The primary structure comprises 609 residues: UvrABC system protein C (609 aa).

The 79-residue stretch at 13-91 (HEPGVYRMYD…IKLYQPRYNV (79 aa)) folds into the GIY-YIG domain. One can recognise a UVR domain in the interval 201 to 236 (QQVLDYLIGKMEQASRNLDFEQAARYRDQIQAVRSV).

This sequence belongs to the UvrC family. Interacts with UvrB in an incision complex.

It localises to the cytoplasm. Functionally, the UvrABC repair system catalyzes the recognition and processing of DNA lesions. UvrC both incises the 5' and 3' sides of the lesion. The N-terminal half is responsible for the 3' incision and the C-terminal half is responsible for the 5' incision. The chain is UvrABC system protein C from Haemophilus influenzae (strain 86-028NP).